A 65-amino-acid chain; its full sequence is Small ribosomal subunit protein eS17 (65 aa).

It belongs to the eukaryotic ribosomal protein eS17 family.

This is Small ribosomal subunit protein eS17 from Methanocella arvoryzae (strain DSM 22066 / NBRC 105507 / MRE50).